The following is an 893-amino-acid chain: Alanine--tRNA ligase (893 aa).

Residues His-573, His-577, Cys-676, and His-680 each contribute to the Zn(2+) site. Positions 853-872 (LGGGGGGKDDLAQGGGQDPS) are disordered.

This sequence belongs to the class-II aminoacyl-tRNA synthetase family. It depends on Zn(2+) as a cofactor.

It is found in the cytoplasm. It carries out the reaction tRNA(Ala) + L-alanine + ATP = L-alanyl-tRNA(Ala) + AMP + diphosphate. In terms of biological role, catalyzes the attachment of alanine to tRNA(Ala) in a two-step reaction: alanine is first activated by ATP to form Ala-AMP and then transferred to the acceptor end of tRNA(Ala). Also edits incorrectly charged Ser-tRNA(Ala) and Gly-tRNA(Ala) via its editing domain. The protein is Alanine--tRNA ligase of Kineococcus radiotolerans (strain ATCC BAA-149 / DSM 14245 / SRS30216).